A 603-amino-acid polypeptide reads, in one-letter code: Adenine deaminase 1 (603 aa).

It belongs to the metallo-dependent hydrolases superfamily. Adenine deaminase family. Mn(2+) is required as a cofactor.

The catalysed reaction is adenine + H2O + H(+) = hypoxanthine + NH4(+). This Carboxydothermus hydrogenoformans (strain ATCC BAA-161 / DSM 6008 / Z-2901) protein is Adenine deaminase 1.